We begin with the raw amino-acid sequence, 460 residues long: DNA repair protein RAD57 (460 aa).

Position 125 to 132 (125 to 132 (GESSTGKS)) interacts with ATP.

This sequence belongs to the RecA family.

It localises to the nucleus. In terms of biological role, participates in the repair of X-ray-induced damage to DNA and in meiosis. It may act in part by stabilizing a repair complex of other RAD genes. The polypeptide is DNA repair protein RAD57 (RAD57) (Saccharomyces cerevisiae (strain ATCC 204508 / S288c) (Baker's yeast)).